Reading from the N-terminus, the 55-residue chain is MMSTLISIVCIAVFFCLNILGMMHMLPLYITSPLLFLSILFTLYRLNHRKTFKGF.

A run of 2 helical transmembrane segments spans residues 5–25 and 26–46; these read LISIVCIAVFFCLNILGMMHM and LPLYITSPLLFLSILFTLYRL.

It localises to the cell membrane. This is an uncharacterized protein from Bacillus subtilis (strain 168).